Consider the following 439-residue polypeptide: Methionine aminopeptidase 2-1 (439 aa).

The tract at residues methionine 1–proline 87 is disordered. Positions glycine 22–glycine 32 are enriched in acidic residues. A compositionally biased stretch (basic residues) spans lysine 47–serine 61. A substrate-binding site is contributed by histidine 190. A divalent metal cation contacts are provided by aspartate 211, aspartate 222, and histidine 291. Histidine 299 contacts substrate. Residues glutamate 324 and glutamate 420 each contribute to the a divalent metal cation site.

It belongs to the peptidase M24A family. Methionine aminopeptidase eukaryotic type 2 subfamily. Requires Co(2+) as cofactor. Zn(2+) serves as cofactor. It depends on Mn(2+) as a cofactor. Fe(2+) is required as a cofactor.

Its subcellular location is the cytoplasm. It catalyses the reaction Release of N-terminal amino acids, preferentially methionine, from peptides and arylamides.. Its function is as follows. Cotranslationally removes the N-terminal methionine from nascent proteins. The N-terminal methionine is often cleaved when the second residue in the primary sequence is small and uncharged (Met-Ala-, Cys, Gly, Pro, Ser, Thr, or Val). The protein is Methionine aminopeptidase 2-1 of Chaetomium globosum (strain ATCC 6205 / CBS 148.51 / DSM 1962 / NBRC 6347 / NRRL 1970) (Soil fungus).